A 127-amino-acid chain; its full sequence is UPF0738 protein Bsph_1225 (127 aa).

Belongs to the UPF0738 family.

The polypeptide is UPF0738 protein Bsph_1225 (Lysinibacillus sphaericus (strain C3-41)).